Here is a 532-residue protein sequence, read N- to C-terminus: Pre-piRNA 3'-exonuclease trimmer (532 aa).

The Mg(2+) site is built by aspartate 28, glutamate 30, aspartate 270, and aspartate 365. A helical membrane pass occupies residues 503–523 (AGRFAIWSGSIVTGGLALYLI).

Belongs to the CAF1 family. In terms of assembly, interacts with Papi/Tdrkh; interaction takes place on the mitochondrial surface and recruits PNLDC1/trimmer to PIWI-bound pre-piRNAs. Requires Mg(2+) as cofactor.

The protein resides in the mitochondrion outer membrane. Its function is as follows. 3'-5' exonuclease that specifically cleaves precursor piRNAs (pre-piRNAs) at their 3' ends. Trims pre-piRNAs to their mature size, a process required for piRNAs maturation and stabilization, and subsequent pre-piRNAs 2'-O-methylation. The piRNA metabolic process mediates the repression of transposable elements during meiosis by forming complexes composed of piRNAs and Piwi proteins and govern the methylation and subsequent repression of transposons. The polypeptide is Pre-piRNA 3'-exonuclease trimmer (Bombyx mori (Silk moth)).